The primary structure comprises 393 residues: Putative amino-acid ABC transporter permease protein YhdX (393 aa).

Helical transmembrane passes span 21–41, 92–112, 128–148, 180–200, 219–239, 256–276, 333–353, and 363–383; these read AWLFQILAVVAVVGIVGWLFH, LLVSALCIVFASVLGFFIGLA, IEIFRNIPPLLQIFFWYFAVL, DGFIAFILAVVMAIVLSVGLF, IAAVLIIGLPLLAQWLFGAAL, VLIPELAALTLALSVYTSAFI, SSLAAAIGYPDMVSLFAGTVL, and IAMTMSVYLIISLTISLLMNI. The region spanning 88 to 381 is the ABC transmembrane type-1 domain; the sequence is LLNTLLVSAL…IISLTISLLM (294 aa).

Belongs to the binding-protein-dependent transport system permease family. HisMQ subfamily.

The protein localises to the cell inner membrane. Probably part of the binding-protein-dependent transport system YdhWXYZ for an amino acid; probably responsible for the translocation of the substrate across the membrane. The chain is Putative amino-acid ABC transporter permease protein YhdX (yhdX) from Escherichia coli (strain K12).